The primary structure comprises 526 residues: Peptide chain release factor 3 (526 aa).

The tr-type G domain maps to 9–277; the sequence is NKRRTFAIIS…DFVEYAPGPQ (269 aa). Residues 18–25, 86–90, and 140–143 contribute to the GTP site; these read SHPDAGKT, DTPGH, and NKLD.

The protein belongs to the TRAFAC class translation factor GTPase superfamily. Classic translation factor GTPase family. PrfC subfamily.

Its subcellular location is the cytoplasm. Functionally, increases the formation of ribosomal termination complexes and stimulates activities of RF-1 and RF-2. It binds guanine nucleotides and has strong preference for UGA stop codons. It may interact directly with the ribosome. The stimulation of RF-1 and RF-2 is significantly reduced by GTP and GDP, but not by GMP. This is Peptide chain release factor 3 from Legionella pneumophila (strain Corby).